The chain runs to 92 residues: MCLLRLPVTLLVLCVALNELKATSIASDTGHQVGKRKCNTATCATQRLTNFLVRSSHNLGAALLPTDVGSNTYGKRNAPQISDRELLHYLPL.

Residues 1–22 form the signal peptide; the sequence is MCLLRLPVTLLVLCVALNELKA. The propeptide occupies 23–34; the sequence is TSIASDTGHQVG. Cysteines 38 and 43 form a disulfide. Position 73 is a tyrosine amide (tyrosine 73). Residues 77–92 constitute a propeptide that is removed on maturation; it reads NAPQISDRELLHYLPL.

The protein belongs to the calcitonin family. As to quaternary structure, can form homodimers. Interacts with IDE and INS. Interaction with INS inhibits homodimerization and fibril formation.

It is found in the secreted. Its function is as follows. Amylin/IAPP is a glucoregulatory peptide hormone that plays an important role in the regulation of energy homeostasis. Selectively inhibits insulin-stimulated glucose utilization and glycogen deposition in muscle, while not affecting adipocyte glucose metabolism. IAPP function is mediated by the CALCR-RAMPs (AMYRs) receptor complexes. Amylin can also bind CALCR receptor in the absence of RAMPs, although it is more selective for AMYRs. This Cavia porcellus (Guinea pig) protein is Islet amyloid polypeptide (IAPP).